Reading from the N-terminus, the 86-residue chain is Large ribosomal subunit protein bL31 (86 aa).

The disordered stretch occupies residues 66–86 (GMGSADSATSQETKEAKESDK). Positions 77-86 (ETKEAKESDK) are enriched in basic and acidic residues.

This sequence belongs to the bacterial ribosomal protein bL31 family. Type A subfamily. In terms of assembly, part of the 50S ribosomal subunit.

In terms of biological role, binds the 23S rRNA. This Prochlorococcus marinus (strain MIT 9515) protein is Large ribosomal subunit protein bL31.